We begin with the raw amino-acid sequence, 511 residues long: 2,3-bisphosphoglycerate-independent phosphoglycerate mutase (511 aa).

Mn(2+)-binding residues include Asp14 and Ser64. Catalysis depends on Ser64, which acts as the Phosphoserine intermediate. Substrate-binding positions include His125, 155–156, Arg187, Arg193, 259–262, and Lys333; these read RD and RADR. Positions 400, 404, 441, 442, and 460 each coordinate Mn(2+).

This sequence belongs to the BPG-independent phosphoglycerate mutase family. As to quaternary structure, monomer. The cofactor is Mn(2+).

The catalysed reaction is (2R)-2-phosphoglycerate = (2R)-3-phosphoglycerate. The protein operates within carbohydrate degradation; glycolysis; pyruvate from D-glyceraldehyde 3-phosphate: step 3/5. Its function is as follows. Catalyzes the interconversion of 2-phosphoglycerate and 3-phosphoglycerate. In Pseudomonas entomophila (strain L48), this protein is 2,3-bisphosphoglycerate-independent phosphoglycerate mutase.